The sequence spans 287 residues: MIKGLIYLFLFRCLEGRLADYEEESSDLGDYSLNGQTDEEYGKFPSHVLTEKETGPMDEIRCTNDDYTYNIKLNVHLQNYAIQAIADAAKPKLGMNLKERDAILSYFGTIANELNADLARLGAQIVIGLKHYKAEDFIDTNSFDTSCEIRDPVMDRLDSTFKQLKDVYQDSMGLRLFVWTCPQLTSSFETMKIMSNLNCGRIMGVLWQGADATRTSIKSTILEAISGVSELYLDGALPVDRVFSNVCRFCSKCVGVEPGVIGWKHPDVVKLIHAIPEEDTHEHGYDH.

The N-terminal stretch at 1-19 is a signal peptide; the sequence is MIKGLIYLFLFRCLEGRLA.

Belongs to the SWP7 family. As to quaternary structure, interacts with SWP9.

The protein resides in the cytoplasm. The protein localises to the spore wall. It is found in the spore polar tube. Functionally, involved in adherence of spores to the host cell surface and in infection efficiency. This is Spore wall protein 7 (SWP7) from Nosema bombycis (strain CQ1 / CVCC 102059) (Microsporidian parasite).